The sequence spans 157 residues: Small ribosomal subunit protein uS7 (157 aa).

This sequence belongs to the universal ribosomal protein uS7 family. Part of the 30S ribosomal subunit. Contacts proteins S9 and S11.

Its function is as follows. One of the primary rRNA binding proteins, it binds directly to 16S rRNA where it nucleates assembly of the head domain of the 30S subunit. Is located at the subunit interface close to the decoding center, probably blocks exit of the E-site tRNA. This is Small ribosomal subunit protein uS7 from Paracidovorax citrulli (strain AAC00-1) (Acidovorax citrulli).